The sequence spans 138 residues: Acidic phospholipase A2 PePLA2 (138 aa).

The signal sequence occupies residues 1–16 (MRTLWIMAVLLLGVEG). Disulfide bonds link Cys42–Cys131, Cys44–Cys60, Cys59–Cys110, Cys65–Cys138, Cys66–Cys103, Cys73–Cys97, and Cys91–Cys101. Positions 43, 45, and 47 each coordinate Ca(2+). His63 is a catalytic residue. Asp64 serves as a coordination point for Ca(2+). Residue Asp104 is part of the active site.

This sequence belongs to the phospholipase A2 family. Group II subfamily. D49 sub-subfamily. Requires Ca(2+) as cofactor. Expressed by the venom gland.

Its subcellular location is the secreted. It catalyses the reaction a 1,2-diacyl-sn-glycero-3-phosphocholine + H2O = a 1-acyl-sn-glycero-3-phosphocholine + a fatty acid + H(+). In terms of biological role, PLA2 catalyzes the calcium-dependent hydrolysis of the 2-acyl groups in 3-sn-phosphoglycerides. The sequence is that of Acidic phospholipase A2 PePLA2 from Protobothrops elegans (Elegant pitviper).